A 164-amino-acid polypeptide reads, in one-letter code: Axial regulator YABBY 5 (164 aa).

Residues 16–43 (CNFCNIILAVNVPCSSLFDIVTVRCGHC) form a C4-type zinc finger.

The protein belongs to the YABBY family. As to quaternary structure, binds to LUG and LUH; these complexes promote adaxial cell identity in leaves as well as embryonic shoot apical meristem (SAM) initiation and postembryonic SAM maintenance. Interacts with SPL/NZZ and SPEAR2.

The protein resides in the nucleus. Its function is as follows. Promotes adaxial cell identity. Regulates the initiation of embryonic shoot apical meristem (SAM) development. The chain is Axial regulator YABBY 5 (YAB5) from Arabidopsis thaliana (Mouse-ear cress).